Consider the following 277-residue polypeptide: 2-dehydro-3-deoxyphosphooctonate aldolase (277 aa).

Belongs to the KdsA family.

It localises to the cytoplasm. It carries out the reaction D-arabinose 5-phosphate + phosphoenolpyruvate + H2O = 3-deoxy-alpha-D-manno-2-octulosonate-8-phosphate + phosphate. It functions in the pathway carbohydrate biosynthesis; 3-deoxy-D-manno-octulosonate biosynthesis; 3-deoxy-D-manno-octulosonate from D-ribulose 5-phosphate: step 2/3. It participates in bacterial outer membrane biogenesis; lipopolysaccharide biosynthesis. The chain is 2-dehydro-3-deoxyphosphooctonate aldolase from Dichelobacter nodosus (strain VCS1703A).